Here is a 1427-residue protein sequence, read N- to C-terminus: MAFRKENKIKSNFSKISIGLASPEEILENSSGEVLKPETINYRTYKPERDGLFCERIFGPIKDYECHCGKYKRIRYKGIVCDRCGVEVTEKKVRRERMGHIQLVVPVAHIWYFRSLPNKIGYLLGLPTKKLDSIIYYERYVVIQPGVKAEDGIAEFDLLSEEEYLDILDTLPKDNQYLEDTDPNKFIAKMGAEAIYDLLARLDLDALSYELRHRAGNDASQQRKNEALKRLQVVESFRASRGRNKPEWMIVRIVPVIPPELRPLVPLDGGRFATSDLNDLYRRVIIRNNRLKRLIEIKAPEVILRNEKRMLQESVDSLFDNSRKSSAVKTDANRPLKSLSDSLKGKQGRFRQNLLGKRVDYSARSVIVVGPELRMHECGIPKLMAAELYKPFIIRKLIERGIVKTVKSAKKIVDRKEPVIWDILEHVMKGHPVLLNRAPTLHRLGIQAFQPKMIEGKAIQLHPLACTAFNADFDGDQMAVHLPLSNEAVLEAQMLMLASHNILNPANGAPITVPSQDMVLGLYYITKLRKGAKGEGLTFYGPEEALIAYNEGKVDIHAPVKVIVKDLDENGNIVDVMRETSVGRVIVNEIVPPEVGYINTIISKKSLRDIISAVIKACGVARTADFLDGIKNLGYKMAFQGGLSFNLGDIIIPKEKETLVQRGYEEVEQVINNYNMGFITNNERYNQVIDIWTHVNSELSNILMKTISSDDQGFNSVYMMLDSGARGSKEQIRQLSGMRGLMAKPQKAGAEGGQIIENPILSNFKEGLSVLEYFISTHGARKGLADTALKTADAGYLTRRLVDVSHDVIINEEDCGTLRGLVCTDLKNNDEVIATLYERILGRVSVHDIIHPQTGELLVAGGEEITEDIAKKIQESPIESVEIRSVLTCESKKGVCAKCYGRNLATNHMVQKGEAVGVIAAQSIGEPGTQLTLRTFHAGGTAANIAANASIVAKNNARLEFEELRTVDIVDETGEAAKVVVGRLAEVRFIDVNTGIVLSTHNVPYGSTLYVADGEVVEKGKLIAKWDPFNAVIITEATGKIEFEGVIENVTYKIESDEATGLREIIIIESKDKTKVPSAHILTEDGDLIRTYNLPVGGHVVIENGQKVKAGEVIVKIPRAVGKAGDITGGLPRVTELFEARNPSNPAVVSEIDGEVTMGKVKRGNREIIVTSKTGEVKKYLVPLSKQILVQENDYVRAGTPLSDGATTPADILAIKGPTAVQEYIVNEVQDVYRLQGVKINDKHFEIIVRQMMRKVTIDEPGDTRFLEQQVVDKLEFMEENDRIWGKKVVVDAGDSENLKAGQIVTARKLRDENSMLKRRDLKPVEVRDAVAATSTQILQGITRAALQTSSFMSAASFQETTKVLNEAAINGKIDKLEGMKENVICGHLIPAGTGLREFDKIIVGSKEEYDRILANKKTVLDYNEVE.

Zn(2+) is bound by residues Cys66, Cys68, Cys81, and Cys84. 3 residues coordinate Mg(2+): Asp472, Asp474, and Asp476. Zn(2+)-binding residues include Cys815, Cys889, Cys896, and Cys899.

It belongs to the RNA polymerase beta' chain family. As to quaternary structure, the RNAP catalytic core consists of 2 alpha, 1 beta, 1 beta' and 1 omega subunit. When a sigma factor is associated with the core the holoenzyme is formed, which can initiate transcription. The cofactor is Mg(2+). Requires Zn(2+) as cofactor.

It carries out the reaction RNA(n) + a ribonucleoside 5'-triphosphate = RNA(n+1) + diphosphate. Functionally, DNA-dependent RNA polymerase catalyzes the transcription of DNA into RNA using the four ribonucleoside triphosphates as substrates. The polypeptide is DNA-directed RNA polymerase subunit beta' (Bacteroides fragilis (strain ATCC 25285 / DSM 2151 / CCUG 4856 / JCM 11019 / LMG 10263 / NCTC 9343 / Onslow / VPI 2553 / EN-2)).